A 123-amino-acid chain; its full sequence is MASPGLGLLLALGLPLLPARWGRAWGQTLDPHVNENGTITPSAPGSGSNGALSQEAITAIIVVFSLLAAVLLAVGLVLLLRKLREKRQTQGTYRPSSEEQFNHAAEARAPQDSKETVRGCLPI.

An N-terminal signal peptide occupies residues 1-26; the sequence is MASPGLGLLLALGLPLLPARWGRAWG. Residues 27 to 59 are Extracellular-facing; sequence QTLDPHVNENGTITPSAPGSGSNGALSQEAITA. N-linked (GlcNAc...) asparagine glycosylation is present at asparagine 36. A helical membrane pass occupies residues 60–80; the sequence is IIVVFSLLAAVLLAVGLVLLL. The Cytoplasmic portion of the chain corresponds to 81-120; sequence RKLREKRQTQGTYRPSSEEQFNHAAEARAPQDSKETVRGC. The disordered stretch occupies residues 87–123; sequence RQTQGTYRPSSEEQFNHAAEARAPQDSKETVRGCLPI. Basic and acidic residues predominate over residues 96-117; sequence SSEEQFNHAAEARAPQDSKETV. Residues 119–123 carry the PDZ-binding motif; sequence GCLPI.

Component of a complex composed of CRB3, PALS1 and PATJ. Interacts (via C-terminus) with PALS1 (via PDZ domain). Interacts with PARD6A. Interacts (via intracellular domain) with EPB41L5. Interacts with WDR83.

It is found in the apical cell membrane. The protein resides in the cell junction. It localises to the tight junction. Involved in the establishment of cell polarity in mammalian epithelial cells. Regulates the morphogenesis of tight junctions. Involved in promoting phosphorylation and cytoplasmic retention of transcriptional coactivators YAP1 and WWTR1/TAZ which leads to suppression of TGFB1-dependent transcription of target genes such as CCN2/CTGF, SERPINE1/PAI1, SNAI1/SNAIL1 and SMAD7. This Canis lupus familiaris (Dog) protein is Protein crumbs homolog 3.